Consider the following 456-residue polypeptide: MTTQTNETIAAIATAPGRGGVGIIRVSGPKALPIAQHILGITPKPRYAHYGDFCNANGDILDQGIALYFPNPHSFTGEDVLELQGHGGPVILDMLLDAVVQAGARLARPGEFSERAFLNDKLDLAQAEAIADLIEASSQQAAKQALNSLKGEFSNKIHELVEQLIHLRMYVESAIDFPEEEIDFLSDGIVEGKLNDVIDQTDAVLAQAQQGALLRDGMKVVIAGRPNAGKSSLLNALAEKDIAIVTNIAGTTRDVLREHIHIDGMPLHIIDTAGLRDSPDHVEQIGIERAWGEIESADRILLLIDTTDNSQLDVNVHWPEFTSNAAYAKKLTVIYNKIDESGFSTTNHTSDAPYQTLPLSAKTGAGLDTLKAHLKSVMGFQSTTEGGFSARRRHIHAIEQAQNYLLTGREQLQLHTAGELLAEDLRAAQNHLSEITGAFTPDDLLGKIFSSFCIGK.

The (6S)-5-formyl-5,6,7,8-tetrahydrofolate site is built by Arg25, Glu82, and Lys121. The TrmE-type G domain maps to 217–379 (GMKVVIAGRP…LKAHLKSVMG (163 aa)). Residue Asn227 coordinates K(+). Residues 227–232 (NAGKSS), 246–252 (TNIAGTT), and 271–274 (DTAG) each bind GTP. Ser231 lines the Mg(2+) pocket. The K(+) site is built by Thr246, Ile248, and Thr251. Residue Thr252 coordinates Mg(2+). Residue Lys456 participates in (6S)-5-formyl-5,6,7,8-tetrahydrofolate binding.

This sequence belongs to the TRAFAC class TrmE-Era-EngA-EngB-Septin-like GTPase superfamily. TrmE GTPase family. As to quaternary structure, homodimer. Heterotetramer of two MnmE and two MnmG subunits. Requires K(+) as cofactor.

It localises to the cytoplasm. Functionally, exhibits a very high intrinsic GTPase hydrolysis rate. Involved in the addition of a carboxymethylaminomethyl (cmnm) group at the wobble position (U34) of certain tRNAs, forming tRNA-cmnm(5)s(2)U34. The polypeptide is tRNA modification GTPase MnmE (Saccharophagus degradans (strain 2-40 / ATCC 43961 / DSM 17024)).